The chain runs to 100 residues: NAD(P)H-quinone oxidoreductase subunit 4L, chloroplastic (100 aa).

3 helical membrane-spanning segments follow: residues 1-21 (MLEH…YGLI), 29-49 (ALMC…TFSN), and 63-83 (IFVT…ALAI).

This sequence belongs to the complex I subunit 4L family. In terms of assembly, NDH is composed of at least 16 different subunits, 5 of which are encoded in the nucleus.

Its subcellular location is the plastid. The protein localises to the chloroplast thylakoid membrane. The catalysed reaction is a plastoquinone + NADH + (n+1) H(+)(in) = a plastoquinol + NAD(+) + n H(+)(out). It catalyses the reaction a plastoquinone + NADPH + (n+1) H(+)(in) = a plastoquinol + NADP(+) + n H(+)(out). Its function is as follows. NDH shuttles electrons from NAD(P)H:plastoquinone, via FMN and iron-sulfur (Fe-S) centers, to quinones in the photosynthetic chain and possibly in a chloroplast respiratory chain. The immediate electron acceptor for the enzyme in this species is believed to be plastoquinone. Couples the redox reaction to proton translocation, and thus conserves the redox energy in a proton gradient. The sequence is that of NAD(P)H-quinone oxidoreductase subunit 4L, chloroplastic from Cycas taitungensis (Prince sago).